The following is a 128-amino-acid chain: uncharacterized protein (128 aa).

Residues 95–123 (IIDFATAKRELDRLTEEIATLKGELAQDK) adopt a coiled-coil conformation.

Its subcellular location is the cellular thylakoid membrane. This is an uncharacterized protein from Synechocystis sp. (strain ATCC 27184 / PCC 6803 / Kazusa).